A 394-amino-acid chain; its full sequence is MADEIMENVELTTSEDVNAVSSFEEMNLKEDLLRGIYAYGYETPSAVQSRAIIQICKGRDVIAQAQSGTGKTATFSIGILQSIDLSVRDTQALILSPTRELAVQIQNVVLALGDHMNVQCHACIGGTSVGNDIKKLDYGQHVVSGTPGRVTDMIRRRNLRTRNVKMLILDEADELLNQGFKEQIYDIYRYLPPGTQVVVVSATLPQDVLEMTNKFTTNPVRILVKRDELTLEGLKQYFIAVEKEEWKFDTLCDLYDTLTITQAVIFCNSRRKVDWLTEKMREANFTVTSMHGEMPQKERDAIMQDFRQGNSRVLICTDIWARGIDVQQVSLVINYDLPANRENYIHRIGRSGRFGRKGVAINFVTNEDVRILRDIEQYYSTVIDEMPMNIGDMV.

The short motif at serine 21–serine 49 is the Q motif element. Residues isoleucine 52–isoleucine 222 enclose the Helicase ATP-binding domain. Alanine 65–threonine 72 contributes to the ATP binding site. Phosphoserine is present on serine 67. Positions aspartate 170–aspartate 173 match the DEAD box motif. The region spanning glycine 233 to valine 394 is the Helicase C-terminal domain.

It belongs to the DEAD box helicase family. DDX48/FAL1 subfamily.

The protein resides in the nucleus. Its subcellular location is the nucleolus. The enzyme catalyses ATP + H2O = ADP + phosphate + H(+). Functionally, ATP-dependent RNA helicase involved in 40S ribosomal subunit biogenesis. Required for the processing and cleavage of 35S pre-rRNA at sites A0, A1, and A2, leading to mature 18S rRNA. The sequence is that of ATP-dependent RNA helicase fal1 (tif412) from Schizosaccharomyces pombe (strain 972 / ATCC 24843) (Fission yeast).